Consider the following 509-residue polypeptide: ATP synthase subunit alpha (509 aa).

Position 169-176 (169-176 (GDRQTGKT)) interacts with ATP.

This sequence belongs to the ATPase alpha/beta chains family. In terms of assembly, F-type ATPases have 2 components, CF(1) - the catalytic core - and CF(0) - the membrane proton channel. CF(1) has five subunits: alpha(3), beta(3), gamma(1), delta(1), epsilon(1). CF(0) has four main subunits: a(1), b(1), b'(1) and c(9-12).

It is found in the cell inner membrane. It catalyses the reaction ATP + H2O + 4 H(+)(in) = ADP + phosphate + 5 H(+)(out). Functionally, produces ATP from ADP in the presence of a proton gradient across the membrane. The alpha chain is a regulatory subunit. In Bradyrhizobium sp. (strain BTAi1 / ATCC BAA-1182), this protein is ATP synthase subunit alpha.